A 238-amino-acid polypeptide reads, in one-letter code: GATA transcription factor 7 (238 aa).

Positions 24-64 are disordered; it reads TSLESSSSQRKEDEQEREKFKSFSDQSTRLSPPEDLLSFPG. Over residues 32–45 the composition is skewed to basic and acidic residues; sequence QRKEDEQEREKFKS. The Nuclear localization signal motif lies at 112 to 119; that stretch reads KPRSKRRR. Residues 160–214 form a GATA-type zinc finger; the sequence is QQLRRCCSHCGVQKTPQWRMGPLGAKTLCNACGVRFKSGRLLPEYRPACSPTFTN.

Belongs to the type IV zinc-finger family. Class A subfamily.

The protein resides in the nucleus. Functionally, transcriptional activator that specifically binds 5'-GATA-3' or 5'-GAT-3' motifs within gene promoters. May be involved in the regulation of some light-responsive genes. The polypeptide is GATA transcription factor 7 (GATA7) (Arabidopsis thaliana (Mouse-ear cress)).